Reading from the N-terminus, the 211-residue chain is N-(5'-phosphoribosyl)anthranilate isomerase (211 aa).

This sequence belongs to the TrpF family.

The catalysed reaction is N-(5-phospho-beta-D-ribosyl)anthranilate = 1-(2-carboxyphenylamino)-1-deoxy-D-ribulose 5-phosphate. The protein operates within amino-acid biosynthesis; L-tryptophan biosynthesis; L-tryptophan from chorismate: step 3/5. The sequence is that of N-(5'-phosphoribosyl)anthranilate isomerase from Methanococcus maripaludis (strain DSM 14266 / JCM 13030 / NBRC 101832 / S2 / LL).